The chain runs to 373 residues: Structure-specific endonuclease subunit EME2 (373 aa).

The interval 24 to 52 (RPQTWEISDSDGEGVPAREVGTQAPSPAG) is disordered. Residues 47 to 260 (APSPAGERRA…LPSKQHRDSQ (214 aa)) form a nuclease-like domain; forms the post-nick DNA binding interface and is involved in DNA recognition and bending region. The segment at 282-373 (GLRGVWWRQI…NPDLLLDLSS (92 aa)) is helix-hairpin-helix (2HhH); forms the pre-nick DNA binding interface and is involved in DNA recognition and bending.

It belongs to the EME1/MMS4 family. Part of the heterodimeric MUS81-EME2 complex; the complex forms specifically during the DNA replication phase of the cell cycle.

Its subcellular location is the nucleus. Functionally, non-catalytic subunit of the structure-specific, heterodimeric DNA endonuclease MUS81-EME2 which is involved in the maintenance of genome stability. In the complex, EME2 is required for DNA cleavage, participating in DNA recognition and bending. MUS81-EME2 cleaves 3'-flaps and nicked Holliday junctions, and exhibit limited endonuclease activity with 5' flaps and nicked double-stranded DNAs. MUS81-EME2 which is active during the replication of DNA is more specifically involved in replication fork processing. Replication forks frequently encounter obstacles to their passage, including DNA base lesions, DNA interstrand cross-links, difficult-to-replicate sequences, transcription bubbles, or tightly bound proteins. One mechanism for the restart of a stalled replication fork involves nucleolytic cleavage mediated by the MUS81-EME2 endonuclease. By acting upon the stalled fork, MUS81-EME2 generates a DNA double-strand break (DSB) that can be repaired by homologous recombination, leading to the restoration of an active fork. MUS81-EME2 could also function in telomere maintenance. This is Structure-specific endonuclease subunit EME2 from Mus musculus (Mouse).